Consider the following 264-residue polypeptide: Thymidylate synthase (264 aa).

DUMP is bound at residue R21. Residue H51 coordinates (6R)-5,10-methylene-5,6,7,8-tetrahydrofolate. 126 to 127 (RR) is a dUMP binding site. The active-site Nucleophile is the C146. DUMP contacts are provided by residues 166-169 (RSCD), N177, and 207-209 (HLY). Position 169 (D169) interacts with (6R)-5,10-methylene-5,6,7,8-tetrahydrofolate. (6R)-5,10-methylene-5,6,7,8-tetrahydrofolate is bound at residue A263.

It belongs to the thymidylate synthase family. Bacterial-type ThyA subfamily. In terms of assembly, homodimer.

Its subcellular location is the cytoplasm. The catalysed reaction is dUMP + (6R)-5,10-methylene-5,6,7,8-tetrahydrofolate = 7,8-dihydrofolate + dTMP. It participates in pyrimidine metabolism; dTTP biosynthesis. Catalyzes the reductive methylation of 2'-deoxyuridine-5'-monophosphate (dUMP) to 2'-deoxythymidine-5'-monophosphate (dTMP) while utilizing 5,10-methylenetetrahydrofolate (mTHF) as the methyl donor and reductant in the reaction, yielding dihydrofolate (DHF) as a by-product. This enzymatic reaction provides an intracellular de novo source of dTMP, an essential precursor for DNA biosynthesis. This is Thymidylate synthase from Yersinia pestis bv. Antiqua (strain Antiqua).